The primary structure comprises 102 residues: Large ribosomal subunit protein bL21 (102 aa).

This sequence belongs to the bacterial ribosomal protein bL21 family. Part of the 50S ribosomal subunit. Contacts protein L20.

In terms of biological role, this protein binds to 23S rRNA in the presence of protein L20. This is Large ribosomal subunit protein bL21 from Bacillus pumilus (strain SAFR-032).